We begin with the raw amino-acid sequence, 134 residues long: Cytochrome b5 (134 aa).

Alanine 2 carries the N-acetylalanine modification. N6-acetyllysine occurs at positions 7, 10, and 19. The Cytochrome b5 heme-binding domain occupies 9-85 (VKYYTLEEIK…SKTFIIGELH (77 aa)). Heme contacts are provided by histidine 44 and histidine 68. The chain crosses the membrane as a helical span at residues 109 to 131 (WWTNWVIPAISALIVALMYRLYM).

This sequence belongs to the cytochrome b5 family.

It localises to the endoplasmic reticulum membrane. Its subcellular location is the microsome membrane. Functionally, cytochrome b5 is a membrane-bound hemoprotein functioning as an electron carrier for several membrane-bound oxygenases. The protein is Cytochrome b5 (CYB5A) of Oryctolagus cuniculus (Rabbit).